A 347-amino-acid chain; its full sequence is N-acetyl-gamma-glutamyl-phosphate reductase (347 aa).

The active site involves Cys-153.

This sequence belongs to the NAGSA dehydrogenase family. Type 1 subfamily.

Its subcellular location is the cytoplasm. It catalyses the reaction N-acetyl-L-glutamate 5-semialdehyde + phosphate + NADP(+) = N-acetyl-L-glutamyl 5-phosphate + NADPH + H(+). Its pathway is amino-acid biosynthesis; L-arginine biosynthesis; N(2)-acetyl-L-ornithine from L-glutamate: step 3/4. In terms of biological role, catalyzes the NADPH-dependent reduction of N-acetyl-5-glutamyl phosphate to yield N-acetyl-L-glutamate 5-semialdehyde. The chain is N-acetyl-gamma-glutamyl-phosphate reductase from Mycobacterium leprae (strain Br4923).